The chain runs to 255 residues: Very-long-chain (3R)-3-hydroxyacyl-CoA dehydratase 2 (255 aa).

The Cytoplasmic portion of the chain corresponds to 3–42; it reads AAAAATAAAKGNGGGGGRAGAGDASGTRKKKGPGPLATAY. The interval 11–34 is disordered; the sequence is AKGNGGGGGRAGAGDASGTRKKKG. Gly residues predominate over residues 13–22; that stretch reads GNGGGGGRAG. Residues 43–61 traverse the membrane as a helical segment; sequence LVIYNVVMTAGWLVIAVGL. The Lumenal portion of the chain corresponds to 62–80; it reads VRAYLAKGSYHSLYYSIEK. A helical membrane pass occupies residues 81 to 98; the sequence is PLKFFQTGALLEILHCAI. Topologically, residues 99–108 are cytoplasmic; it reads GIVPSSVVLT. A helical transmembrane segment spans residues 109-126; sequence SFQVMSRVFLIWAVTHSV. The Lumenal portion of the chain corresponds to 127-131; sequence KEVQS. A helical transmembrane segment spans residues 132–147; the sequence is EDSVLLFVIAWTITEI. The Cytoplasmic portion of the chain corresponds to 148–170; that stretch reads IRYSFYTFSLLNHLPYLIKWARY. The helical transmembrane segment at 171 to 188 threads the bilayer; that stretch reads TLFIVLYPMGVSGELLTI. Catalysis depends on residues Tyr-177 and Glu-184. At 189–218 the chain is on the lumenal side; sequence YAALPFVRQAGLYSISLPNKYNFSFDYYAF. The interval 199-215 is may be involved in interaction with TECR; it reads GLYSISLPNKYNFSFDY. The N-linked (GlcNAc...) asparagine glycan is linked to Asn-210. Residues 219–236 traverse the membrane as a helical segment; that stretch reads LILIMISYIPIFPQLYFH. At 237-255 the chain is on the cytoplasmic side; sequence MIHQRRKILSHTEEHKKFE.

The protein belongs to the very long-chain fatty acids dehydratase HACD family. May interact with enzymes of the ELO family (including ELOVL1); with those enzymes that mediate condensation, the first of the four steps of the reaction cycle responsible for fatty acids elongation, may be part of a larger fatty acids elongase complex. Interacts with BCAP31. Interacts (via the third lumenal loop) with TECR.

Its subcellular location is the endoplasmic reticulum membrane. The enzyme catalyses a very-long-chain (3R)-3-hydroxyacyl-CoA = a very-long-chain (2E)-enoyl-CoA + H2O. The catalysed reaction is (3R)-hydroxyhexadecanoyl-CoA = (2E)-hexadecenoyl-CoA + H2O. It catalyses the reaction (3R)-hydroxyoctadecanoyl-CoA = (2E)-octadecenoyl-CoA + H2O. It carries out the reaction (3R)-hydroxyeicosanoyl-CoA = (2E)-eicosenoyl-CoA + H2O. The enzyme catalyses (3R)-hydroxydocosanoyl-CoA = (2E)-docosenoyl-CoA + H2O. The catalysed reaction is (3R)-hydroxytetracosanoyl-CoA = (2E)-tetracosenoyl-CoA + H2O. It catalyses the reaction (3R)-hydroxyhexacosanoyl-CoA = (2E)-hexacosenoyl-CoA + H2O. It participates in lipid metabolism; fatty acid biosynthesis. Its function is as follows. Catalyzes the third of the very long-chain fatty acids (VLCFA) elongation four-step cycle (condensation, reduction, dehydration, and reduction). This endoplasmic reticulum-elongation process is characterized by the addition of two carbons to the lipid chain through each cycle. This enzyme catalyzes the dehydration of the 3-hydroxyacyl-CoA intermediate into trans-2,3-enoyl-CoA, within each cycle of elongation. Therefore, it participates in the production of various VLCFAs involved in multiple biological processes as precursors of membrane lipids and lipid mediators. In Pongo abelii (Sumatran orangutan), this protein is Very-long-chain (3R)-3-hydroxyacyl-CoA dehydratase 2.